Reading from the N-terminus, the 78-residue chain is Small ribosomal subunit protein bS18 (78 aa).

This sequence belongs to the bacterial ribosomal protein bS18 family. As to quaternary structure, part of the 30S ribosomal subunit. Forms a tight heterodimer with protein bS6.

Functionally, binds as a heterodimer with protein bS6 to the central domain of the 16S rRNA, where it helps stabilize the platform of the 30S subunit. This is Small ribosomal subunit protein bS18 from Alkaliphilus oremlandii (strain OhILAs) (Clostridium oremlandii (strain OhILAs)).